The following is a 185-amino-acid chain: Peptide deformylase (185 aa).

Fe cation-binding residues include Cys-112 and His-155. The active site involves Glu-156. His-159 provides a ligand contact to Fe cation.

The protein belongs to the polypeptide deformylase family. It depends on Fe(2+) as a cofactor.

It carries out the reaction N-terminal N-formyl-L-methionyl-[peptide] + H2O = N-terminal L-methionyl-[peptide] + formate. Functionally, removes the formyl group from the N-terminal Met of newly synthesized proteins. Requires at least a dipeptide for an efficient rate of reaction. N-terminal L-methionine is a prerequisite for activity but the enzyme has broad specificity at other positions. In Latilactobacillus sakei subsp. sakei (strain 23K) (Lactobacillus sakei subsp. sakei), this protein is Peptide deformylase.